The primary structure comprises 496 residues: Probable zinc metalloprotease SNOG_06590 (496 aa).

A signal peptide spans 1 to 20; sequence MRSSMFFAVCAAAALQTALS. Residue Asn-138 is glycosylated (N-linked (GlcNAc...) asparagine). Residues His-161, Asp-181, and Glu-226 each contribute to the Zn(2+) site. Asn-241 carries an N-linked (GlcNAc...) asparagine glycan. Zn(2+) is bound at residue Asp-253. N-linked (GlcNAc...) asparagine glycans are attached at residues Asn-282, Asn-361, Asn-409, Asn-415, and Asn-457. One can recognise a Fibronectin type-III domain in the interval 402–496; that stretch reads EPMNVGINTT…PFPFGCTRNC (95 aa).

This sequence belongs to the peptidase M28 family. M28B subfamily. It depends on Zn(2+) as a cofactor.

Its subcellular location is the secreted. The sequence is that of Probable zinc metalloprotease SNOG_06590 from Phaeosphaeria nodorum (strain SN15 / ATCC MYA-4574 / FGSC 10173) (Glume blotch fungus).